A 279-amino-acid polypeptide reads, in one-letter code: Aldo-keto reductase Mvan_2161 (279 aa).

The Proton donor role is filled by Y54. 9 residues coordinate NADPH: L194, V196, I232, R234, S235, R240, S243, N244, and R270.

The protein belongs to the aldo/keto reductase family.

The protein is Aldo-keto reductase Mvan_2161 of Mycolicibacterium vanbaalenii (strain DSM 7251 / JCM 13017 / BCRC 16820 / KCTC 9966 / NRRL B-24157 / PYR-1) (Mycobacterium vanbaalenii).